We begin with the raw amino-acid sequence, 756 residues long: Conserved oligomeric Golgi complex subunit 2 (756 aa).

The stretch at 62–82 (RSELRSHLASLNRELVDLINR) forms a coiled coil. The interval 173-199 (WQNEDANSMGRSSMNDENSTQQDGTTM) is disordered.

This sequence belongs to the COG2 family. As to quaternary structure, homodimer. Component of the conserved oligomeric Golgi complex which is composed of eight different subunits and is required for normal Golgi morphology and localization. Binds to COG3 and COG4. Interacts with FPP3/VETH1 and FPP2/VETH2; this interaction promotes the association between cortical microtubules and EXO70A1. Binds to SEC15B, and, possibly, with EXO70A1, SEC3A and SEC10A.

The protein localises to the golgi apparatus membrane. In terms of biological role, required for normal Golgi morphology and function. Ensures, when in complex with FPP3/VETH1 and FPP2/VETH2, the correct secondary cell wall (SCW) deposition pattern by recruiting exocyst components to cortical microtubules in xylem cells during secondary cell wall deposition. This chain is Conserved oligomeric Golgi complex subunit 2, found in Arabidopsis thaliana (Mouse-ear cress).